The sequence spans 252 residues: D-aminoacyl-tRNA deacylase (252 aa).

This sequence belongs to the DtdA deacylase family. In terms of assembly, monomer. Requires Zn(2+) as cofactor.

The catalysed reaction is a D-aminoacyl-tRNA + H2O = a tRNA + a D-alpha-amino acid + H(+). The enzyme catalyses glycyl-tRNA(Ala) + H2O = tRNA(Ala) + glycine + H(+). Its function is as follows. D-aminoacyl-tRNA deacylase with broad substrate specificity. By recycling D-aminoacyl-tRNA to D-amino acids and free tRNA molecules, this enzyme counteracts the toxicity associated with the formation of D-aminoacyl-tRNA entities in vivo. The chain is D-aminoacyl-tRNA deacylase from Pyrobaculum arsenaticum (strain DSM 13514 / JCM 11321 / PZ6).